Here is a 759-residue protein sequence, read N- to C-terminus: Mitogen-activated protein kinase kinase kinase 1a (759 aa).

Basic and acidic residues-rich tracts occupy residues 1–17 (MIEERGSSRGSREDRGS), 25–36 (SFEDKGSSHDWK), and 52–64 (AKKDRNYDAKVDS). Disordered stretches follow at residues 1–90 (MIEE…NLSK), 122–160 (LGIEASDWESRRKSAVYSRPTSPPRVSHDTGQSSYSHDF), 165–184 (SRVDSSLESPPLSPRGLAPM), and 195–239 (RKHR…PDPL). Residues 72 to 85 (VHSTSSPRLSPASS) show a composition bias toward low complexity. The 254-residue stretch at 426-679 (WAKGEFLGSG…CDMLLAHPFI (254 aa)) folds into the Protein kinase domain. ATP is bound by residues 432–440 (LGSGTFGSV) and Lys-454. Asp-549 serves as the catalytic Proton acceptor.

It belongs to the protein kinase superfamily. STE Ser/Thr protein kinase family. MAP kinase kinase kinase subfamily.

Its subcellular location is the cell membrane. It carries out the reaction L-seryl-[protein] + ATP = O-phospho-L-seryl-[protein] + ADP + H(+). It catalyses the reaction L-threonyl-[protein] + ATP = O-phospho-L-threonyl-[protein] + ADP + H(+). In terms of biological role, the CERK1, MEKK1a/b, MKK1a/b/c and MPK4a/b proteins are involved in pathogen defense. The pathway induces rapid growth inhibition, cell wall depositions and accumulation of defense-related transcripts. This protein is required for responses to chitin and acts redundantly with MEKK1b. This Physcomitrium patens (Spreading-leaved earth moss) protein is Mitogen-activated protein kinase kinase kinase 1a.